A 305-amino-acid polypeptide reads, in one-letter code: Tyrosine recombinase XerC (305 aa).

Positions 4 to 95 (TSIQELIDKW…AVKNFYRFLE (92 aa)) constitute a Core-binding (CB) domain. Positions 116 to 298 (LLPKALSEDD…SIKHLEAVYT (183 aa)) constitute a Tyr recombinase domain. Catalysis depends on residues Arg-159, Lys-182, His-250, Arg-253, and His-276. Catalysis depends on Tyr-285, which acts as the O-(3'-phospho-DNA)-tyrosine intermediate.

It belongs to the 'phage' integrase family. XerC subfamily. In terms of assembly, forms a cyclic heterotetrameric complex composed of two molecules of XerC and two molecules of XerD.

Its subcellular location is the cytoplasm. Its function is as follows. Site-specific tyrosine recombinase, which acts by catalyzing the cutting and rejoining of the recombining DNA molecules. The XerC-XerD complex is essential to convert dimers of the bacterial chromosome into monomers to permit their segregation at cell division. It also contributes to the segregational stability of plasmids. The sequence is that of Tyrosine recombinase XerC from Rickettsia felis (strain ATCC VR-1525 / URRWXCal2) (Rickettsia azadi).